The following is a 455-amino-acid chain: Catalase-like protein (455 aa).

The tract at residues 1-25 is disordered; the sequence is MSQQDKKLTGVFGHPVSDRENSMTA.

Belongs to the catalase family.

Functionally, catalytically inactive. The chain is Catalase-like protein (katB) from Staphylococcus aureus.